Here is a 262-residue protein sequence, read N- to C-terminus: Acyl-[acyl-carrier-protein]--UDP-N-acetylglucosamine O-acyltransferase (262 aa).

This sequence belongs to the transferase hexapeptide repeat family. LpxA subfamily. As to quaternary structure, homotrimer.

The protein resides in the cytoplasm. The enzyme catalyses a (3R)-hydroxyacyl-[ACP] + UDP-N-acetyl-alpha-D-glucosamine = a UDP-3-O-[(3R)-3-hydroxyacyl]-N-acetyl-alpha-D-glucosamine + holo-[ACP]. It functions in the pathway glycolipid biosynthesis; lipid IV(A) biosynthesis; lipid IV(A) from (3R)-3-hydroxytetradecanoyl-[acyl-carrier-protein] and UDP-N-acetyl-alpha-D-glucosamine: step 1/6. Its function is as follows. Involved in the biosynthesis of lipid A, a phosphorylated glycolipid that anchors the lipopolysaccharide to the outer membrane of the cell. The sequence is that of Acyl-[acyl-carrier-protein]--UDP-N-acetylglucosamine O-acyltransferase from Verminephrobacter eiseniae (strain EF01-2).